The following is a 197-amino-acid chain: Molybdenum cofactor guanylyltransferase (197 aa).

GTP-binding positions include 12-14 (LAG), Lys-25, Asn-53, Asp-71, and Asp-101. Position 101 (Asp-101) interacts with Mg(2+).

It belongs to the MobA family. Monomer. The cofactor is Mg(2+).

The protein localises to the cytoplasm. The enzyme catalyses Mo-molybdopterin + GTP + H(+) = Mo-molybdopterin guanine dinucleotide + diphosphate. Its function is as follows. Transfers a GMP moiety from GTP to Mo-molybdopterin (Mo-MPT) cofactor (Moco or molybdenum cofactor) to form Mo-molybdopterin guanine dinucleotide (Mo-MGD) cofactor. The sequence is that of Molybdenum cofactor guanylyltransferase from Bordetella pertussis (strain Tohama I / ATCC BAA-589 / NCTC 13251).